The primary structure comprises 103 residues: Pyrimidine/purine nucleoside phosphorylase (103 aa).

The protein belongs to the nucleoside phosphorylase PpnP family.

The enzyme catalyses a purine D-ribonucleoside + phosphate = a purine nucleobase + alpha-D-ribose 1-phosphate. It carries out the reaction adenosine + phosphate = alpha-D-ribose 1-phosphate + adenine. It catalyses the reaction cytidine + phosphate = cytosine + alpha-D-ribose 1-phosphate. The catalysed reaction is guanosine + phosphate = alpha-D-ribose 1-phosphate + guanine. The enzyme catalyses inosine + phosphate = alpha-D-ribose 1-phosphate + hypoxanthine. It carries out the reaction thymidine + phosphate = 2-deoxy-alpha-D-ribose 1-phosphate + thymine. It catalyses the reaction uridine + phosphate = alpha-D-ribose 1-phosphate + uracil. The catalysed reaction is xanthosine + phosphate = alpha-D-ribose 1-phosphate + xanthine. In terms of biological role, catalyzes the phosphorolysis of diverse nucleosides, yielding D-ribose 1-phosphate and the respective free bases. Can use uridine, adenosine, guanosine, cytidine, thymidine, inosine and xanthosine as substrates. Also catalyzes the reverse reactions. This chain is Pyrimidine/purine nucleoside phosphorylase, found in Shewanella sp. (strain W3-18-1).